The primary structure comprises 233 residues: Thrombin-like enzyme elegaxobin-1 (233 aa).

In terms of domain architecture, Peptidase S1 spans 1-224 (VIGGDECNIN…HLDWIKGIIA (224 aa)). Intrachain disulfides connect Cys7/Cys138, Cys25/Cys41, Cys73/Cys231, Cys117/Cys185, Cys149/Cys164, and Cys175/Cys200. Active-site charge relay system residues include His40 and Asp85. Ser179 serves as the catalytic Charge relay system.

This sequence belongs to the peptidase S1 family. Snake venom subfamily. In terms of assembly, monomer. Expressed by the venom gland.

The protein resides in the secreted. In terms of biological role, thrombin-like snake venom serine protease that clots rabbit fibrinogen. Only the beta chain of fibrinogen (FGB) is cleaved, releasing fibrinopeptide B. Incubation with human fibrinogen alpha and beta resulted in cleavage of both fibrinogen chains but generated neither fibrinopeptide A nor fibrinopeptide B. Promotes clotting of rabbit fibrinogen, but not bovine or human fibrinogen. The protein is Thrombin-like enzyme elegaxobin-1 of Protobothrops elegans (Elegant pitviper).